We begin with the raw amino-acid sequence, 561 residues long: MEVRRRAPLPPPPGRVQAGDALPLPIRHTNLIFSALFAASLAYLMRRWREKIRSSTPLHVVGLAEMLAIFGLVASLIYLLSFFGIAFVQSIVSSSDDEEEDFLVGPARGSSAAAAVAPPPPPSSPAQCSLLGSPHDDAARERMPEEDEEIVSSVVAGKVPSYVLETKLGDCRRAAGIRREAVRRITGRQIEGLPLDGFDYASILGQCCELPVGYVQLPVGIAGPLLLDGQRFYVPMATTEGCLVASTNRGCKAIAESGGAVSVVLRDGMTRAPVARLPTARRAAELKAFLEDSVNFNTLSMVFNRSSRFARLQGVQCAMAGRNLYMRFSCCTGDAMGMNMVSKGVQNVLDYLQDDFPDMDVISISGNFCSDKKPAAVNWIEGRGKSVVCEAVIKEDVVKKVLKTNVQSLVELNVIKNLAGSAVAGALGGFNAHASNIVTAIFIATGQDPAQNVESSHCITMLEAVNDGRDLHISVTMPSIEVGTVGGGTQLASQAACLDLLGVKGANRESPGSNARLLATVVAGGVLAGELSLLSALAAGQLVKSHMKYNRSSKDMSKVIS.

2 helical membrane-spanning segments follow: residues 25–45 and 69–89; these read PIRH…AYLM and IFGL…AFVQ. The tract at residues 90–145 is linker; sequence SIVSSSDDEEEDFLVGPARGSSAAAAVAPPPPPSSPAQCSLLGSPHDDAARERMPE. Residues 113–146 form a disordered region; it reads AAAVAPPPPPSSPAQCSLLGSPHDDAARERMPEE. Positions 134-143 are enriched in basic and acidic residues; that stretch reads PHDDAARERM. The segment at 146–561 is catalytic; that stretch reads EDEEIVSSVV…SSKDMSKVIS (416 aa). Glu240 functions as the Charge relay system in the catalytic mechanism. A glycan (N-linked (GlcNAc...) asparagine) is linked at Asn304. Catalysis depends on charge relay system residues Lys372 and Asp448. The active-site Proton donor is the His546. Asn550 carries N-linked (GlcNAc...) asparagine glycosylation.

It belongs to the HMG-CoA reductase family.

The protein localises to the endoplasmic reticulum membrane. It catalyses the reaction (R)-mevalonate + 2 NADP(+) + CoA = (3S)-3-hydroxy-3-methylglutaryl-CoA + 2 NADPH + 2 H(+). Its pathway is metabolic intermediate biosynthesis; (R)-mevalonate biosynthesis; (R)-mevalonate from acetyl-CoA: step 3/3. Catalyzes the synthesis of mevalonate. The specific precursor of all isoprenoid compounds present in plants. In Oryza sativa subsp. japonica (Rice), this protein is 3-hydroxy-3-methylglutaryl-coenzyme A reductase 3 (HMG3).